A 38-amino-acid chain; its full sequence is Defensin-like peptide 3 (38 aa).

2 cysteine pairs are disulfide-bonded: Cys-6/Cys-36 and Cys-13/Cys-29.

As to expression, produced by the crural gland and detected in venom from the spur located on each male hind leg.

Its subcellular location is the secreted. In terms of biological role, does not show antimicrobial, myotoxic, hemolytic and cell-promoting activities. The chain is Defensin-like peptide 3 from Ornithorhynchus anatinus (Duckbill platypus).